The chain runs to 172 residues: L-methionine sulfoximine/L-methionine sulfone acetyltransferase (172 aa).

The N-acetyltransferase domain occupies 3 to 166 (ASIRDAGVAD…DLTFMQLNLD (164 aa)). Substrate-binding positions include 75–77 (RPF) and 85–87 (EHS). Acetyl-CoA-binding positions include 88 to 90 (VYV), 96 to 101 (GKGLGV), and Asn-127.

In terms of assembly, homodimer.

It catalyses the reaction L-methionine sulfoximine + acetyl-CoA = N-acetyl-L-methionine sulfoximine + CoA + H(+). The catalysed reaction is L-methionine sulfone + acetyl-CoA = N-acetyl-L-methionine sulfone + CoA + H(+). Its function is as follows. Plays a role in the resistance against the toxic effects of L-methionine sulfoximine (MSX), a rare amino acid, which inhibits glutamine synthetase (GlnA). Catalyzes the acetylation of L-methionine sulfoximine (MSX). It can also use L-methionine sulfone (MSO). This chain is L-methionine sulfoximine/L-methionine sulfone acetyltransferase, found in Pseudomonas paraeruginosa (strain DSM 24068 / PA7) (Pseudomonas aeruginosa (strain PA7)).